The following is an 843-amino-acid chain: Protein P (843 aa).

The tract at residues 1–177 (MPLSYPHFRK…FCGSPYSWEQ (177 aa)) is terminal protein domain (TP). The interval 178-346 (ELQHGSTSIN…YCLSHIINLL (169 aa)) is spacer. 2 disordered regions span residues 180–221 (QHGS…FQQS) and 282–313 (REKTNPSLSTSKRHSSTGHAVELNPVPPGSVR). A compositionally biased stretch (polar residues) spans 196-221 (SLCTQSSGILSRPSAGSSIQGKFQQS). The segment at 347 to 690 (EDWGPCYEHG…YMHLYPVARQ (344 aa)) is polymerase/reverse transcriptase domain (RT). A Reverse transcriptase domain is found at 357–600 (QHHIRTPRTP…YTLNFMGYVI (244 aa)). Residues Asp429, Asp551, and Asp552 each contribute to the Mg(2+) site.

This sequence belongs to the hepadnaviridae P protein family.

The enzyme catalyses DNA(n) + a 2'-deoxyribonucleoside 5'-triphosphate = DNA(n+1) + diphosphate. The catalysed reaction is Endonucleolytic cleavage to 5'-phosphomonoester.. Its activity is regulated as follows. Activated by host HSP70 and HSP40 in vitro to be able to bind the epsilon loop of the pgRNA. Because deletion of the RNase H region renders the protein partly chaperone-independent, the chaperones may be needed indirectly to relieve occlusion of the RNA-binding site by this domain. Inhibited by several reverse-transcriptase inhibitors: Lamivudine, Adefovir and Entecavir. In terms of biological role, multifunctional enzyme that converts the viral RNA genome into dsDNA in viral cytoplasmic capsids. This enzyme displays a DNA polymerase activity that can copy either DNA or RNA templates, and a ribonuclease H (RNase H) activity that cleaves the RNA strand of RNA-DNA heteroduplexes in a partially processive 3'- to 5'-endonucleasic mode. Neo-synthesized pregenomic RNA (pgRNA) are encapsidated together with the P protein, and reverse-transcribed inside the nucleocapsid. Initiation of reverse-transcription occurs first by binding the epsilon loop on the pgRNA genome, and is initiated by protein priming, thereby the 5'-end of (-)DNA is covalently linked to P protein. Partial (+)DNA is synthesized from the (-)DNA template and generates the relaxed circular DNA (RC-DNA) genome. After budding and infection, the RC-DNA migrates in the nucleus, and is converted into a plasmid-like covalently closed circular DNA (cccDNA). The activity of P protein does not seem to be necessary for cccDNA generation, and is presumably released from (+)DNA by host nuclear DNA repair machinery. This is Protein P from Homo sapiens (Human).